We begin with the raw amino-acid sequence, 146 residues long: UPF0178 protein BCAH820_3075 (146 aa).

The protein belongs to the UPF0178 family.

This chain is UPF0178 protein BCAH820_3075, found in Bacillus cereus (strain AH820).